A 404-amino-acid polypeptide reads, in one-letter code: uncharacterized protein (404 aa).

The span at 1–22 (MASSINNSSQPTVPSISNNSHG) shows a compositional bias: polar residues. The segment at 1–110 (MASSINNSSQ…QQTPVKRRRR (110 aa)) is disordered. Phosphothreonine is present on threonine 47. The span at 87–104 (SRGSSLKSHLETESQQTP) shows a compositional bias: polar residues. A PHD-type zinc finger spans residues 117 to 166 (VDYCSACGGRGLFICCEGCPCSFHLSCLEPPLTPENIPEGSWFCVTCSIK).

This is an uncharacterized protein from Schizosaccharomyces pombe (strain 972 / ATCC 24843) (Fission yeast).